A 439-amino-acid polypeptide reads, in one-letter code: Transmembrane protease serine 11F (439 aa).

Residues 1-33 (MMYAPVEFSQTAYPRIEYQRRQQQFWDPIRLAL) are Cytoplasmic-facing. A helical; Signal-anchor for type II membrane protein transmembrane segment spans residues 34-54 (FTLAIVAIVGITIGIVTHFVV). The Extracellular portion of the chain corresponds to 55-439 (EDDKSFYYLA…RDWIASKTGL (385 aa)). Positions 58 to 176 (KSFYYLASFQ…PSFSLTPIDS (119 aa)) constitute an SEA domain. Positions 207–438 (IVQGRETAME…YRDWIASKTG (232 aa)) constitute a Peptidase S1 domain. Cysteines 234 and 250 form a disulfide. Residues histidine 249 and aspartate 294 each act as charge relay system in the active site. Disulfide bonds link cysteine 359–cysteine 375 and cysteine 386–cysteine 414. The Charge relay system role is filled by serine 390.

The protein belongs to the peptidase S1 family.

It is found in the membrane. Functionally, probable serine protease. The protein is Transmembrane protease serine 11F (Tmprss11f) of Mus musculus (Mouse).